Here is a 184-residue protein sequence, read N- to C-terminus: Flavin prenyltransferase UbiX (184 aa).

Residues 9–11 (GAS), Ser34, 85–88 (SMKT), and Arg120 each bind FMN. Residues Tyr150 and Arg166 each contribute to the dimethylallyl phosphate site.

Belongs to the UbiX/PAD1 family.

The catalysed reaction is dimethylallyl phosphate + FMNH2 = prenylated FMNH2 + phosphate. Flavin prenyltransferase that catalyzes the synthesis of the prenylated FMN cofactor (prenyl-FMN) for 4-hydroxy-3-polyprenylbenzoic acid decarboxylase UbiD. The prenyltransferase is metal-independent and links a dimethylallyl moiety from dimethylallyl monophosphate (DMAP) to the flavin N5 and C6 atoms of FMN. In Methanocaldococcus jannaschii (strain ATCC 43067 / DSM 2661 / JAL-1 / JCM 10045 / NBRC 100440) (Methanococcus jannaschii), this protein is Flavin prenyltransferase UbiX.